The following is a 160-amino-acid chain: 6,7-dimethyl-8-ribityllumazine synthase (160 aa).

5-amino-6-(D-ribitylamino)uracil-binding positions include tryptophan 31, serine 65–glutamate 67, and cysteine 89–valine 91. Aspartate 94–threonine 95 contacts (2S)-2-hydroxy-3-oxobutyl phosphate. The active-site Proton donor is histidine 97. A 5-amino-6-(D-ribitylamino)uracil-binding site is contributed by phenylalanine 122. Arginine 136 contributes to the (2S)-2-hydroxy-3-oxobutyl phosphate binding site.

It belongs to the DMRL synthase family.

It catalyses the reaction (2S)-2-hydroxy-3-oxobutyl phosphate + 5-amino-6-(D-ribitylamino)uracil = 6,7-dimethyl-8-(1-D-ribityl)lumazine + phosphate + 2 H2O + H(+). It functions in the pathway cofactor biosynthesis; riboflavin biosynthesis; riboflavin from 2-hydroxy-3-oxobutyl phosphate and 5-amino-6-(D-ribitylamino)uracil: step 1/2. Its function is as follows. Catalyzes the formation of 6,7-dimethyl-8-ribityllumazine by condensation of 5-amino-6-(D-ribitylamino)uracil with 3,4-dihydroxy-2-butanone 4-phosphate. This is the penultimate step in the biosynthesis of riboflavin. In Parabacteroides distasonis (strain ATCC 8503 / DSM 20701 / CIP 104284 / JCM 5825 / NCTC 11152), this protein is 6,7-dimethyl-8-ribityllumazine synthase.